Reading from the N-terminus, the 406-residue chain is NADH-ubiquinone oxidoreductase 49 kDa subunit (406 aa).

This sequence belongs to the complex I 49 kDa subunit family. As to quaternary structure, complex I is composed of 45 different subunits. Component of the iron-sulfur (IP) fragment of the enzyme.

Its subcellular location is the mitochondrion inner membrane. It carries out the reaction a ubiquinone + NADH + 5 H(+)(in) = a ubiquinol + NAD(+) + 4 H(+)(out). Its function is as follows. Core subunit of the mitochondrial membrane respiratory chain NADH dehydrogenase (Complex I) that is believed to belong to the minimal assembly required for catalysis. Complex I functions in the transfer of electrons from NADH to the respiratory chain. The immediate electron acceptor for the enzyme is believed to be ubiquinone. This Dictyostelium citrinum (Slime mold) protein is NADH-ubiquinone oxidoreductase 49 kDa subunit (nad7).